The sequence spans 60 residues: Mastoparan-VT6 (60 aa).

Positions 1–27 (MKNTILILFTAFIALLGFFGMSAEALA) are cleaved as a signal peptide. AXPX repeat units follow at residues 27-30 (ADPK), 31-34 (ADPL), 35-38 (AGPN), and 41-44 (ADPE). A propeptide spanning residues 28–45 (DPKADPLAGPNPDADPEA) is cleaved from the precursor. Residue leucine 59 is modified to Leucine amide.

It belongs to the MCD family. Mastoparan subfamily. In terms of tissue distribution, expressed by the venom gland.

The protein localises to the secreted. In terms of biological role, the synthetic peptide shows antimicrobial activities against Gram-negative bacteria (but not against all strains tested), Gram-positive bacteria (all strains tested) and the fungi C.albicans and C.parapsilosis. Exhibits little hemolytic activity against washed human erythrocytes. This Vespa tropica (Greater banded hornet) protein is Mastoparan-VT6.